The following is a 215-amino-acid chain: Protein LURP-one-related 4 (215 aa).

Belongs to the LOR family.

Functionally, might be related to the phospholipid scramblase and tubby-like superfamily of membrane tethered transcription factors. The polypeptide is Protein LURP-one-related 4 (Arabidopsis thaliana (Mouse-ear cress)).